A 336-amino-acid chain; its full sequence is Biotin synthase (336 aa).

A Radical SAM core domain is found at 54 to 281 (NAIQLSTLLS…KAMVRLSAGR (228 aa)). [4Fe-4S] cluster-binding residues include cysteine 69, cysteine 73, and cysteine 76. Positions 113, 144, 204, and 276 each coordinate [2Fe-2S] cluster.

The protein belongs to the radical SAM superfamily. Biotin synthase family. In terms of assembly, homodimer. It depends on [4Fe-4S] cluster as a cofactor. The cofactor is [2Fe-2S] cluster.

It catalyses the reaction (4R,5S)-dethiobiotin + (sulfur carrier)-SH + 2 reduced [2Fe-2S]-[ferredoxin] + 2 S-adenosyl-L-methionine = (sulfur carrier)-H + biotin + 2 5'-deoxyadenosine + 2 L-methionine + 2 oxidized [2Fe-2S]-[ferredoxin]. It participates in cofactor biosynthesis; biotin biosynthesis; biotin from 7,8-diaminononanoate: step 2/2. Catalyzes the conversion of dethiobiotin (DTB) to biotin by the insertion of a sulfur atom into dethiobiotin via a radical-based mechanism. This Burkholderia mallei (strain ATCC 23344) protein is Biotin synthase.